Consider the following 467-residue polypeptide: Citrate synthase, mitochondrial (467 aa).

Residues His301 and His347 contribute to the active site.

It belongs to the citrate synthase family.

It is found in the mitochondrion matrix. It carries out the reaction oxaloacetate + acetyl-CoA + H2O = citrate + CoA + H(+). It participates in carbohydrate metabolism; tricarboxylic acid cycle; isocitrate from oxaloacetate: step 1/2. The protein is Citrate synthase, mitochondrial (CIT) of Candida tropicalis (Yeast).